The primary structure comprises 192 residues: Xanthine phosphoribosyltransferase (192 aa).

The xanthine site is built by Leu-20 and Thr-26. A 5-phospho-alpha-D-ribose 1-diphosphate-binding site is contributed by 127–131; the sequence is ANGQA. A xanthine-binding site is contributed by Lys-155.

It belongs to the purine/pyrimidine phosphoribosyltransferase family. Xpt subfamily. Homodimer.

It localises to the cytoplasm. The catalysed reaction is XMP + diphosphate = xanthine + 5-phospho-alpha-D-ribose 1-diphosphate. Its pathway is purine metabolism; XMP biosynthesis via salvage pathway; XMP from xanthine: step 1/1. Converts the preformed base xanthine, a product of nucleic acid breakdown, to xanthosine 5'-monophosphate (XMP), so it can be reused for RNA or DNA synthesis. This chain is Xanthine phosphoribosyltransferase, found in Streptococcus thermophilus.